Consider the following 808-residue polypeptide: Phospholipase D alpha 1 (808 aa).

Residues 1 to 125 (MSKVLLHGTL…LDGDEVDKWI (125 aa)) enclose the C2 domain. Asp-186 is a binding site for Ca(2+). The PLD phosphodiesterase 1 domain occupies 326–364 (TMFTHHQKIVVVDHELPRGGSQKRRVMSFVGGIDLCDGR). Catalysis depends on residues His-331, Lys-333, and Asp-338. His-331 is an a 1,2-diacyl-sn-glycero-3-phosphate binding site. Residues His-370 and His-404 each contribute to the Ca(2+) site. A 1,2-diacyl-sn-glycero-3-phosphate-binding residues include Gln-520 and His-659. The 28-residue stretch at 654–681 (FMIYVHSKMMIVDDEYIIVGSANINQRS) folds into the PLD phosphodiesterase 2 domain. Catalysis depends on residues His-659, Lys-661, and Asp-666. Residue Glu-720 participates in Ca(2+) binding.

It belongs to the phospholipase D family. C2-PLD subfamily. As to quaternary structure, interacts (via C2 domain) with CARDA (via RGD or KGE motifs). Requires Ca(2+) as cofactor.

It carries out the reaction a 1,2-diacyl-sn-glycero-3-phosphocholine + H2O = a 1,2-diacyl-sn-glycero-3-phosphate + choline + H(+). In terms of biological role, hydrolyzes glycerol-phospholipids at the terminal phosphodiesteric bond. Plays an important role in various cellular processes. In Cynara cardunculus (Cardoon), this protein is Phospholipase D alpha 1.